A 330-amino-acid chain; its full sequence is Serine/threonine-protein phosphatase PP1-alpha catalytic subunit (330 aa).

Position 2 is an N-acetylserine (Ser-2). A phosphoserine mark is found at Ser-2 and Ser-22. Positions 64, 66, 92, and 124 each coordinate Mn(2+). His-125 (proton donor) is an active-site residue. Mn(2+) contacts are provided by His-173 and His-248. Lys-305 is modified (N6-acetyllysine). Tyr-306 carries the phosphotyrosine modification. The interval 306-330 (YGQFSGLNPGGRPITPPRNSAKAKK) is disordered. Thr-320 is subject to Phosphothreonine. Ser-325 is modified (phosphoserine).

The protein belongs to the PPP phosphatase family. PP-1 subfamily. PP1 comprises a catalytic subunit, PPP1CA, PPP1CB or PPP1CC, which is folded into its native form by inhibitor 2 and glycogen synthetase kinase 3, and then complexed to one or several targeting or regulatory subunits. PPP1R12A, PPP1R12B and PPP1R12C mediate binding to myosin. PPP1R3A (in skeletal muscle), PPP1R3B (in liver), PPP1R3C, PPP1R3D and PPP1R3F (in brain) mediate binding to glycogen. Interacts with PPP1R39. Interacts with BTBD10. Interacts with KCTD20. Interacts with PPP1R9A and PPP1R9B. Part of a complex containing PPP1R15B, PP1 and NCK1/2. Interacts with PHACTR4; which acts as an activator of PP1 activity. Interacts with PPP1R15A and PPP1R15B; the interactions mediate binding to EIF2S1. Interacts with PPP1R7. Interacts with YLPM1. Forms a complex with ILF2, ILF3, YLPM1, KHDRBS1, RBMX and NCOA5. Interacts with NOM1 and PPP1R8. Interacts with PPP1R16B. Interacts with RPSA only in the presence of PPP1R16B. Component of the PNUTS-PP1 phosphatase complex, composed of PPP1R10/PNUTS, TOX4, WDR82, and PPP1CA or PPP1CB or PPP1CC. Interacts with PPP1R10/PNUTS and PPP1R8. Interacts with WDR82 in the presence of PPP1R10/PNUTS. Interacts with TRIM28; the interaction dephosphorylates TRIM28 on 'Ser-824' and forms a complex at the p21 promoter site. Interacts with isoform 1 and isoform 4 of NEK2. Interacts with FER; this promotes phosphorylation at Thr-320. Interacts with DAB2; the interaction is mutually exclusive with the AXIN1:PPP1CA interaction. Interacts with FOXP3. Interacts with CENPA. Interacts with ATG16L1. Found in a complex with PPP1CA, PPP1CC, SHC1 and PEAK1. Interacts with tensin TNS1. Interacts with SAXO4, PPP1R21, PPP1R26, PPP1R27, PPP1R35, PPP1R36, PPP1R37, SH3RF2, ELFN1 and ELFN2. Interacts with TPRN; the interaction results in inhibition of PPC1A phosphatase activity. Interacts with SKA1 (via C-terminus); the interaction is direct and required for the recruitment of PP1 to the kinetochore. Interacts with the KNL1 complex subunit KNL1; the interaction is direct and mutually exclusive with KNL1 binding to microtubules. Component of the SHOC2-MRAS-PP1c (SMP) complex consisting of SHOC2, GTP-bound M-Ras/MRAS and the catalytic subunit of protein phosphatase 1 (either PPP1CA, PPP1CB or PPP1CC). SHOC2 and PP1c preferably bind M-Ras/MRAS, but they also bind K-Ras/KRAS, N-Ras/NRAS and H-Ras/HRAS; these interactions are GTP-dependent and both SHOC2 and PP1c are required to form a stable complex. Interacts with SHOC2 in the absence of Ras GTPases. In terms of assembly, (Microbial infection) Interacts with HHV-1 ICP34.5. As to quaternary structure, (Microbial infection) Interacts with Venezuelan equine encephalitis virus (VEEV) capsid protein; this interaction dephosphorylates the capsid protein, which increases its ability to bind to the viral genome. The cofactor is Fe cation. Mn(2+) serves as cofactor. Phosphorylated. Dephosphorylated at Thr-320 in the presence of ionizing radiation.

The protein localises to the cytoplasm. The protein resides in the nucleus. It is found in the nucleoplasm. Its subcellular location is the nucleolus. The catalysed reaction is O-phospho-L-seryl-[protein] + H2O = L-seryl-[protein] + phosphate. It catalyses the reaction O-phospho-L-threonyl-[protein] + H2O = L-threonyl-[protein] + phosphate. Its activity is regulated as follows. The phosphatase activity of the PPP1R15A-PP1 complex toward EIF2S1 is specifically inhibited by Salubrinal, a drug that protects cells from endoplasmic reticulum stress. Functionally, protein phosphatase that associates with over 200 regulatory proteins to form highly specific holoenzymes which dephosphorylate hundreds of biological targets. Protein phosphatase 1 (PP1) is essential for cell division, transcription elongation, and participates in the regulation of glycogen metabolism, muscle contractility and protein synthesis. Involved in regulation of ionic conductances and long-term synaptic plasticity. May play an important role in dephosphorylating substrates such as the postsynaptic density-associated Ca(2+)/calmodulin dependent protein kinase II. Catalytic component of the PNUTS-PP1 protein phosphatase complex, a protein phosphatase 1 (PP1) complex that promotes RNA polymerase II transcription pause-release, allowing transcription elongation: the PNUTS-PP1 complex mediates the release of RNA polymerase II from promoter-proximal region of genes by catalyzing dephosphorylation of proteins involved in transcription, such as AFF4, CDK9, MEPCE, INTS12, NCBP1, POLR2M/GDOWN1 and SUPT6H. The PNUTS-PP1 complex also regulates transcription termination by mediating dephosphorylation of SUPT5H in termination zones downstream of poly(A) sites, thereby promoting deceleration of RNA polymerase II transcription. PNUTS-PP1 complex is also involved in the response to replication stress by mediating dephosphorylation of POLR2A at 'Ser-5' of the CTD, promoting RNA polymerase II degradation. PNUTS-PP1 also plays a role in the control of chromatin structure and cell cycle progression during the transition from mitosis into interphase. Regulates NEK2 function in terms of kinase activity and centrosome number and splitting, both in the presence and absence of radiation-induced DNA damage. Regulator of neural tube and optic fissure closure, and enteric neural crest cell (ENCCs) migration during development. In balance with CSNK1D and CSNK1E, determines the circadian period length, through the regulation of the speed and rhythmicity of PER1 and PER2 phosphorylation. May dephosphorylate CSNK1D and CSNK1E. Dephosphorylates the 'Ser-418' residue of FOXP3 in regulatory T-cells (Treg) from patients with rheumatoid arthritis, thereby inactivating FOXP3 and rendering Treg cells functionally defective. Dephosphorylates CENPA. Dephosphorylates the 'Ser-139' residue of ATG16L1 causing dissociation of ATG12-ATG5-ATG16L1 complex, thereby inhibiting autophagy. Together with PPP1CC (PP1-gamma subunit), dephosphorylates IFIH1/MDA5 and RIG-I leading to their activation and a functional innate immune response. Core component of the SHOC2-MRAS-PP1c (SMP) holophosphatase complex that regulates the MAPK pathway activation. The SMP complex specifically dephosphorylates the inhibitory phosphorylation at 'Ser-259' of RAF1 kinase, 'Ser-365' of BRAF kinase and 'Ser-214' of ARAF kinase, stimulating their kinase activities. The SMP complex enhances the dephosphorylation activity and substrate specificity of PP1c. Its function is as follows. (Microbial infection) Necessary for alphaviruses replication. This chain is Serine/threonine-protein phosphatase PP1-alpha catalytic subunit (PPP1CA), found in Homo sapiens (Human).